The sequence spans 547 residues: NXPE family member 1 (547 aa).

A signal peptide spans 1–21 (MSSNTMLQKTLLILISFSVVT). Residues Asn-39 and Asn-211 are each glycosylated (N-linked (GlcNAc...) asparagine).

It belongs to the NXPE family.

It localises to the secreted. The protein is NXPE family member 1 (NXPE1) of Homo sapiens (Human).